The sequence spans 1035 residues: Potassium-transporting ATPase alpha chain 1 (1035 aa).

The disordered stretch occupies residues methionine 1–glutamate 41. Topologically, residues methionine 1 to proline 98 are cytoplasmic. Phosphotyrosine is present on residues tyrosine 7 and tyrosine 10. Residues methionine 26–lysine 40 show a composition bias toward basic residues. Phosphoserine is present on serine 27. The helical transmembrane segment at glutamate 99–alanine 119 threads the bilayer. At alanine 120 to tyrosine 142 the chain is on the lumenal side. Residues leucine 143 to phenylalanine 163 traverse the membrane as a helical segment. Residues lysine 164–isoleucine 299 are Cytoplasmic-facing. Residues glutamate 300 to valine 319 traverse the membrane as a helical segment. Over valine 320 to alanine 331 the chain is Lumenal. Residues methionine 332–alanine 349 traverse the membrane as a helical segment. Residues valine 340, alanine 341, valine 343, and glutamate 345 each contribute to the K(+) site. The Cytoplasmic segment spans residues threonine 350–leucine 783. Aspartate 387 acts as the 4-aspartylphosphate intermediate in catalysis. 2 residues coordinate Mg(2+): aspartate 387 and threonine 389. Residues serine 463 and serine 601 each carry the phosphoserine modification. Residues aspartate 728 and aspartate 732 each contribute to the Mg(2+) site. Residues lysine 784–isoleucine 803 traverse the membrane as a helical segment. Glutamate 797 serves as a coordination point for K(+). The Lumenal segment spans residues tyrosine 804–leucine 813. Residues glycine 814–alanine 834 traverse the membrane as a helical segment. Position 822 (glutamate 822) interacts with K(+). At tyrosine 835–arginine 854 the chain is on the cytoplasmic side. The residue at position 840 (serine 840) is a Phosphoserine. The helical transmembrane segment at leucine 855 to phenylalanine 877 threads the bilayer. The Lumenal portion of the chain corresponds to threonine 878–cysteine 929. The helical transmembrane segment at tyrosine 930–lysine 949 threads the bilayer. At threonine 950 to asparagine 963 the chain is on the cytoplasmic side. The residue at position 954 (serine 954) is a Phosphoserine; by PKA. The chain crosses the membrane as a helical span at residues arginine 964 to tyrosine 982. Residues cysteine 983–phenylalanine 997 are Lumenal-facing. The helical transmembrane segment at glutamine 998–lysine 1018 threads the bilayer. The Cytoplasmic portion of the chain corresponds to leucine 1019 to tyrosine 1035.

Belongs to the cation transport ATPase (P-type) (TC 3.A.3) family. Type IIC subfamily. As to quaternary structure, the gastric H(+)/K(+) ATPase pump is composed of the catalytic alpha subunit ATP4A and the regulatory beta subunit ATP4B. Interacts (via the P-domain) with ATP4B (via N-terminus); this interaction stabilizes the lumenal-open E2 conformation state and prevents the reverse reaction of the transport cycle.

The protein localises to the apical cell membrane. It localises to the cell membrane. The catalysed reaction is K(+)(out) + ATP + H2O + H(+)(in) = K(+)(in) + ADP + phosphate + 2 H(+)(out). Functionally, the catalytic subunit of the gastric H(+)/K(+) ATPase pump which transports H(+) ions in exchange for K(+) ions across the apical membrane of parietal cells. Uses ATP as an energy source to pump H(+) ions to the gastric lumen while transporting K(+) ion from the lumen into the cell. Remarkably generates a million-fold proton gradient across the gastric parietal cell membrane, acidifying the gastric juice down to pH 1. Within a transport cycle, the transfer of a H(+) ion across the membrane is coupled to ATP hydrolysis and is associated with a transient phosphorylation that shifts the pump conformation from inward-facing (E1) to outward-facing state (E2). The release of the H(+) ion in the stomach lumen is followed by binding of K(+) ion converting the pump conformation back to the E1 state. This chain is Potassium-transporting ATPase alpha chain 1 (ATP4A), found in Oryctolagus cuniculus (Rabbit).